Reading from the N-terminus, the 143-residue chain is Peptide methionine sulfoxide reductase MsrB (143 aa).

The region spanning 16 to 139 (DAELRRRLTP…NSAALNFESR (124 aa)) is the MsrB domain. Residues C55, C58, C104, and C107 each contribute to the Zn(2+) site. The active-site Nucleophile is the C128.

The protein belongs to the MsrB Met sulfoxide reductase family. Zn(2+) is required as a cofactor.

It catalyses the reaction L-methionyl-[protein] + [thioredoxin]-disulfide + H2O = L-methionyl-(R)-S-oxide-[protein] + [thioredoxin]-dithiol. The sequence is that of Peptide methionine sulfoxide reductase MsrB from Burkholderia lata (strain ATCC 17760 / DSM 23089 / LMG 22485 / NCIMB 9086 / R18194 / 383).